The primary structure comprises 132 residues: uncharacterized protein (132 aa).

Residues 66 to 86 (LPPMLLVLAALFVKGLIPLVL) form a helical membrane-spanning segment.

Its subcellular location is the membrane. This is an uncharacterized protein from Saccharomyces cerevisiae (strain ATCC 204508 / S288c) (Baker's yeast).